The following is a 147-amino-acid chain: 6-pyruvoyl tetrahydrobiopterin synthase (147 aa).

His-26 provides a ligand contact to Zn(2+). Catalysis depends on Cys-45, which acts as the Proton acceptor. Residues His-51 and His-53 each contribute to the Zn(2+) site. Active-site charge relay system residues include His-92 and Glu-136.

It belongs to the PTPS family. In terms of assembly, homohexamer formed of two homotrimers in a head to head fashion. The cofactor is Zn(2+).

It catalyses the reaction 7,8-dihydroneopterin 3'-triphosphate = 6-pyruvoyl-5,6,7,8-tetrahydropterin + triphosphate + H(+). Its pathway is cofactor biosynthesis; tetrahydrobiopterin biosynthesis; tetrahydrobiopterin from 7,8-dihydroneopterin triphosphate: step 1/3. Involved in the biosynthesis of tetrahydrobiopterin, an essential cofactor of aromatic amino acid hydroxylases. Catalyzes the transformation of 7,8-dihydroneopterin triphosphate into 6-pyruvoyl tetrahydropterin. The protein is 6-pyruvoyl tetrahydrobiopterin synthase (pts) of Poecilia reticulata (Guppy).